Consider the following 202-residue polypeptide: MGAMQTQALGMVPMVIEQSGRGERSYDIYSRLLKERVIFLVGPVNDYVANLVVAQLLFLESDNPDKDISFYINSPGGSVSAGMAIFDTMNFVKPDVSTLCTGMAASMGAFLLAAGAKGKRFSLPNSKVMIHQPSGGSQGQATEIEIQAREILKTREQLNKILAERTGQPLARIERDTERDYYMSADECKEYGLIDQVISKRA.

Ser106 functions as the Nucleophile in the catalytic mechanism. Residue His131 is part of the active site.

Belongs to the peptidase S14 family. In terms of assembly, fourteen ClpP subunits assemble into 2 heptameric rings which stack back to back to give a disk-like structure with a central cavity, resembling the structure of eukaryotic proteasomes.

It is found in the cytoplasm. It catalyses the reaction Hydrolysis of proteins to small peptides in the presence of ATP and magnesium. alpha-casein is the usual test substrate. In the absence of ATP, only oligopeptides shorter than five residues are hydrolyzed (such as succinyl-Leu-Tyr-|-NHMec, and Leu-Tyr-Leu-|-Tyr-Trp, in which cleavage of the -Tyr-|-Leu- and -Tyr-|-Trp bonds also occurs).. In terms of biological role, cleaves peptides in various proteins in a process that requires ATP hydrolysis. Has a chymotrypsin-like activity. Plays a major role in the degradation of misfolded proteins. In Albidiferax ferrireducens (strain ATCC BAA-621 / DSM 15236 / T118) (Rhodoferax ferrireducens), this protein is ATP-dependent Clp protease proteolytic subunit.